We begin with the raw amino-acid sequence, 263 residues long: Retinoic acid early transcript 1E (263 aa).

The signal sequence occupies residues methionine 1 to glycine 30. The tract at residues histidine 31–aspartate 116 is MHC class I alpha-1 like; down-regulates the cell surface expression of KLRK1. The Extracellular portion of the chain corresponds to histidine 31–aspartate 225. Asparagine 36, asparagine 154, and asparagine 212 each carry an N-linked (GlcNAc...) asparagine glycan. The segment at proline 117–threonine 207 is MHC class I alpha-2 like; down-regulates the cell surface expression of KLRK1. A disulfide bond links cysteine 126 and cysteine 189. Residues arginine 226–tryptophan 248 form a helical membrane-spanning segment. Residues glutamine 249–serine 263 lie on the Cytoplasmic side of the membrane.

This sequence belongs to the MHC class I family. As to quaternary structure, binds to KLRK1/NKG2D. In terms of assembly, (Microbial infection) Contrary to other family members, does not interact with CMV glycoprotein UL16. In terms of tissue distribution, predominantly expressed in the skin, but also expressed in testis and trachea. Up-regulated in tumor cells of different origins. Expression progressively decreased after treatment of tumor cells with retinoic acid.

The protein resides in the membrane. It is found in the secreted. Its function is as follows. Binds and activates the KLRK1/NKG2D receptor, mediating natural killer cell cytotoxicity. This Homo sapiens (Human) protein is Retinoic acid early transcript 1E.